Consider the following 193-residue polypeptide: Cuticle protein 18.7 (193 aa).

In terms of biological role, component of the cuticle of migratory locust which contains more than 100 different structural proteins. This is Cuticle protein 18.7 from Locusta migratoria (Migratory locust).